Reading from the N-terminus, the 492-residue chain is 3-octaprenyl-4-hydroxybenzoate carboxy-lyase (492 aa).

Asparagine 177 is a Mn(2+) binding site. Prenylated FMN contacts are provided by residues isoleucine 180 to arginine 182, arginine 194 to leucine 196, and arginine 199 to glycine 200. Glutamate 243 serves as a coordination point for Mn(2+). The active-site Proton donor is the aspartate 292.

The protein belongs to the UbiD family. In terms of assembly, homohexamer. Prenylated FMN is required as a cofactor. Requires Mn(2+) as cofactor.

The protein resides in the cell membrane. It carries out the reaction a 4-hydroxy-3-(all-trans-polyprenyl)benzoate + H(+) = a 2-(all-trans-polyprenyl)phenol + CO2. The protein operates within cofactor biosynthesis; ubiquinone biosynthesis. Its function is as follows. Catalyzes the decarboxylation of 3-octaprenyl-4-hydroxy benzoate to 2-octaprenylphenol, an intermediate step in ubiquinone biosynthesis. The protein is 3-octaprenyl-4-hydroxybenzoate carboxy-lyase of Neisseria meningitidis serogroup C / serotype 2a (strain ATCC 700532 / DSM 15464 / FAM18).